We begin with the raw amino-acid sequence, 233 residues long: Probable fimbrial chaperone protein ElfD (233 aa).

A signal peptide spans Met-1 to Ala-26.

Belongs to the periplasmic pilus chaperone family.

Its subcellular location is the periplasm. Its function is as follows. Part of the elfADCG-ycbUVF fimbrial operon, which promotes adhesion of bacteria to different abiotic surfaces. Could be required for the biogenesis of the ElfA fimbriae. This chain is Probable fimbrial chaperone protein ElfD (elfD), found in Escherichia coli (strain K12).